Here is a 209-residue protein sequence, read N- to C-terminus: Octanoyltransferase (209 aa).

One can recognise a BPL/LPL catalytic domain in the interval 30 to 209 (DHEPEIIYLV…IQTEFNKIFK (180 aa)). Substrate is bound by residues 69 to 76 (RGGKFTFH), 143 to 145 (AIG), and 156 to 158 (GVA). The active-site Acyl-thioester intermediate is the cysteine 174.

Belongs to the LipB family.

It localises to the cytoplasm. The enzyme catalyses octanoyl-[ACP] + L-lysyl-[protein] = N(6)-octanoyl-L-lysyl-[protein] + holo-[ACP] + H(+). The protein operates within protein modification; protein lipoylation via endogenous pathway; protein N(6)-(lipoyl)lysine from octanoyl-[acyl-carrier-protein]: step 1/2. Its function is as follows. Catalyzes the transfer of endogenously produced octanoic acid from octanoyl-acyl-carrier-protein onto the lipoyl domains of lipoate-dependent enzymes. Lipoyl-ACP can also act as a substrate although octanoyl-ACP is likely to be the physiological substrate. The chain is Octanoyltransferase from Rickettsia peacockii (strain Rustic).